Here is an 83-residue protein sequence, read N- to C-terminus: Cytochrome b559 subunit alpha (83 aa).

The helical transmembrane segment at 21-35 (VIHSITIPSLFIAGW) threads the bilayer. Residue His-23 coordinates heme.

The protein belongs to the PsbE/PsbF family. In terms of assembly, heterodimer of an alpha subunit and a beta subunit. PSII is composed of 1 copy each of membrane proteins PsbA, PsbB, PsbC, PsbD, PsbE, PsbF, PsbH, PsbI, PsbJ, PsbK, PsbL, PsbM, PsbT, PsbX, PsbY, PsbZ, Psb30/Ycf12, at least 3 peripheral proteins of the oxygen-evolving complex and a large number of cofactors. It forms dimeric complexes. The cofactor is heme b.

Its subcellular location is the plastid. The protein resides in the chloroplast thylakoid membrane. Its function is as follows. This b-type cytochrome is tightly associated with the reaction center of photosystem II (PSII). PSII is a light-driven water:plastoquinone oxidoreductase that uses light energy to abstract electrons from H(2)O, generating O(2) and a proton gradient subsequently used for ATP formation. It consists of a core antenna complex that captures photons, and an electron transfer chain that converts photonic excitation into a charge separation. This Staurastrum punctulatum (Green alga) protein is Cytochrome b559 subunit alpha.